A 250-amino-acid polypeptide reads, in one-letter code: Adenosylcobinamide-GDP ribazoletransferase (250 aa).

A run of 6 helical transmembrane segments spans residues 33 to 53, 63 to 83, 109 to 129, 137 to 157, 180 to 200, and 203 to 223; these read IASY…LFYI, IVMT…HIDG, LGTN…LFLT, LTAL…SMMI, FAIA…LAVF, and ILTI…LRIG.

This sequence belongs to the CobS family. Requires Mg(2+) as cofactor.

It localises to the cell membrane. It carries out the reaction alpha-ribazole + adenosylcob(III)inamide-GDP = adenosylcob(III)alamin + GMP + H(+). It catalyses the reaction alpha-ribazole 5'-phosphate + adenosylcob(III)inamide-GDP = adenosylcob(III)alamin 5'-phosphate + GMP + H(+). It functions in the pathway cofactor biosynthesis; adenosylcobalamin biosynthesis; adenosylcobalamin from cob(II)yrinate a,c-diamide: step 7/7. Joins adenosylcobinamide-GDP and alpha-ribazole to generate adenosylcobalamin (Ado-cobalamin). Also synthesizes adenosylcobalamin 5'-phosphate from adenosylcobinamide-GDP and alpha-ribazole 5'-phosphate. The protein is Adenosylcobinamide-GDP ribazoletransferase of Thermoanaerobacter sp. (strain X514).